An 85-amino-acid polypeptide reads, in one-letter code: Depressant scorpion toxin BmKIM (85 aa).

The N-terminal stretch at 1 to 21 (MKLFLLLVFFASMLIDGLVNA) is a signal peptide. Residues 22-82 (DGYIRGSNGC…TWKSESNTCG (61 aa)) enclose the LCN-type CS-alpha/beta domain. 4 disulfides stabilise this stretch: Cys31–Cys81, Cys35–Cys56, Cys42–Cys63, and Cys46–Cys65. Gly82 carries the post-translational modification Glycine amide.

It belongs to the long (4 C-C) scorpion toxin superfamily. Sodium channel inhibitor family. In terms of tissue distribution, expressed by the venom gland.

It is found in the secreted. Causes a slow progressive depressant flaccid paralysis, when injected into S.falculata blowfly larvae. Inhibits dose-dependently the total sodium (Nav) currents both in dorsal root ganglia neurons and in ventricular myocytes. Is toxic to mice by intravenous injection, but not by subcutaneous or intracerebroventricular injection. Produces antiarrhythmia in rat. Is then active on both mammals and insects. The protein is Depressant scorpion toxin BmKIM (KIM2) of Olivierus martensii (Manchurian scorpion).